The sequence spans 154 residues: MSSDQHLQVSKIQAGTVIDHIPAGQALQVLQILGTNGASDDQITVGMNVTSERHHRKDIVKIEGRELSQDEVDVLSLIAPDATINIVRDYEVDEKRRVDRPDVVAGVLSCPNPNCITANDEPVRSGFDVLDDGMRCQYCEQIVSEDIPSLIDPE.

Residues cysteine 110, cysteine 115, cysteine 136, and cysteine 139 each coordinate Zn(2+).

The protein belongs to the PyrI family. In terms of assembly, contains catalytic and regulatory chains. The cofactor is Zn(2+).

Its function is as follows. Involved in allosteric regulation of aspartate carbamoyltransferase. This is Aspartate carbamoyltransferase regulatory chain from Halobacterium salinarum (strain ATCC 700922 / JCM 11081 / NRC-1) (Halobacterium halobium).